A 267-amino-acid chain; its full sequence is Putative glycosyltransferase 63 (267 aa).

Belongs to the glycosyltransferase group 1 family. Glycosyltransferase 4 subfamily.

This Sulfolobus islandicus filamentous virus (isolate Iceland/Hveragerdi) (SIFV) protein is Putative glycosyltransferase 63 (SIFV0063).